Consider the following 398-residue polypeptide: L-glutamine--4-(methylsulfanyl)-2-oxobutanoate aminotransferase (398 aa).

Lys-240 carries the post-translational modification N6-(pyridoxal phosphate)lysine.

This sequence belongs to the class-I pyridoxal-phosphate-dependent aminotransferase family. MtnE subfamily. It depends on pyridoxal 5'-phosphate as a cofactor.

The enzyme catalyses 4-methylsulfanyl-2-oxobutanoate + L-glutamine = 2-oxoglutaramate + L-methionine. The protein operates within amino-acid biosynthesis; L-methionine biosynthesis via salvage pathway; L-methionine from S-methyl-5-thio-alpha-D-ribose 1-phosphate: step 6/6. Its function is as follows. Involved in the methylthioribose (MTR) recycling pathway. Catalyzes the formation of methionine from 2-keto-4-methylthiobutyrate (KMTB). The chain is L-glutamine--4-(methylsulfanyl)-2-oxobutanoate aminotransferase from Bacillus subtilis (strain 168).